The chain runs to 122 residues: Large ribosomal subunit protein uL18 (122 aa).

This sequence belongs to the universal ribosomal protein uL18 family. In terms of assembly, part of the 50S ribosomal subunit; part of the 5S rRNA/L5/L18/L25 subcomplex. Contacts the 5S and 23S rRNAs.

Functionally, this is one of the proteins that bind and probably mediate the attachment of the 5S RNA into the large ribosomal subunit, where it forms part of the central protuberance. The chain is Large ribosomal subunit protein uL18 from Dictyoglomus thermophilum (strain ATCC 35947 / DSM 3960 / H-6-12).